The following is a 140-amino-acid chain: Nucleoside diphosphate kinase (140 aa).

ATP contacts are provided by lysine 9, phenylalanine 57, arginine 85, threonine 91, arginine 102, and asparagine 112. The active-site Pros-phosphohistidine intermediate is the histidine 115.

This sequence belongs to the NDK family. Homotetramer. It depends on Mg(2+) as a cofactor.

It is found in the cytoplasm. The enzyme catalyses a 2'-deoxyribonucleoside 5'-diphosphate + ATP = a 2'-deoxyribonucleoside 5'-triphosphate + ADP. The catalysed reaction is a ribonucleoside 5'-diphosphate + ATP = a ribonucleoside 5'-triphosphate + ADP. In terms of biological role, major role in the synthesis of nucleoside triphosphates other than ATP. The ATP gamma phosphate is transferred to the NDP beta phosphate via a ping-pong mechanism, using a phosphorylated active-site intermediate. This chain is Nucleoside diphosphate kinase, found in Chlorobium limicola (strain DSM 245 / NBRC 103803 / 6330).